The chain runs to 315 residues: 4-hydroxy-3-methylbut-2-enyl diphosphate reductase (315 aa).

[4Fe-4S] cluster is bound at residue Cys18. The (2E)-4-hydroxy-3-methylbut-2-enyl diphosphate site is built by His47 and His80. His47 and His80 together coordinate dimethylallyl diphosphate. 2 residues coordinate isopentenyl diphosphate: His47 and His80. A [4Fe-4S] cluster-binding site is contributed by Cys102. (2E)-4-hydroxy-3-methylbut-2-enyl diphosphate is bound at residue His130. His130 is a dimethylallyl diphosphate binding site. Residue His130 coordinates isopentenyl diphosphate. The active-site Proton donor is the Glu132. Residue Thr171 participates in (2E)-4-hydroxy-3-methylbut-2-enyl diphosphate binding. [4Fe-4S] cluster is bound at residue Cys201. 4 residues coordinate (2E)-4-hydroxy-3-methylbut-2-enyl diphosphate: Ser229, Ser230, Asn231, and Ser274. Dimethylallyl diphosphate-binding residues include Ser229, Ser230, Asn231, and Ser274. Ser229, Ser230, Asn231, and Ser274 together coordinate isopentenyl diphosphate.

The protein belongs to the IspH family. [4Fe-4S] cluster serves as cofactor.

It carries out the reaction isopentenyl diphosphate + 2 oxidized [2Fe-2S]-[ferredoxin] + H2O = (2E)-4-hydroxy-3-methylbut-2-enyl diphosphate + 2 reduced [2Fe-2S]-[ferredoxin] + 2 H(+). The enzyme catalyses dimethylallyl diphosphate + 2 oxidized [2Fe-2S]-[ferredoxin] + H2O = (2E)-4-hydroxy-3-methylbut-2-enyl diphosphate + 2 reduced [2Fe-2S]-[ferredoxin] + 2 H(+). It participates in isoprenoid biosynthesis; dimethylallyl diphosphate biosynthesis; dimethylallyl diphosphate from (2E)-4-hydroxy-3-methylbutenyl diphosphate: step 1/1. Its pathway is isoprenoid biosynthesis; isopentenyl diphosphate biosynthesis via DXP pathway; isopentenyl diphosphate from 1-deoxy-D-xylulose 5-phosphate: step 6/6. Functionally, catalyzes the conversion of 1-hydroxy-2-methyl-2-(E)-butenyl 4-diphosphate (HMBPP) into a mixture of isopentenyl diphosphate (IPP) and dimethylallyl diphosphate (DMAPP). Acts in the terminal step of the DOXP/MEP pathway for isoprenoid precursor biosynthesis. The chain is 4-hydroxy-3-methylbut-2-enyl diphosphate reductase from Hyphomonas neptunium (strain ATCC 15444).